A 421-amino-acid polypeptide reads, in one-letter code: UPF0300 protein C737.04 (421 aa).

It belongs to the UPF0300 family.

The protein localises to the cytoplasm. The polypeptide is UPF0300 protein C737.04 (Schizosaccharomyces pombe (strain 972 / ATCC 24843) (Fission yeast)).